The sequence spans 298 residues: ATP phosphoribosyltransferase (298 aa).

This sequence belongs to the ATP phosphoribosyltransferase family. Long subfamily. Mg(2+) is required as a cofactor.

Its subcellular location is the cytoplasm. It catalyses the reaction 1-(5-phospho-beta-D-ribosyl)-ATP + diphosphate = 5-phospho-alpha-D-ribose 1-diphosphate + ATP. It functions in the pathway amino-acid biosynthesis; L-histidine biosynthesis; L-histidine from 5-phospho-alpha-D-ribose 1-diphosphate: step 1/9. Its activity is regulated as follows. Feedback inhibited by histidine. Catalyzes the condensation of ATP and 5-phosphoribose 1-diphosphate to form N'-(5'-phosphoribosyl)-ATP (PR-ATP). Has a crucial role in the pathway because the rate of histidine biosynthesis seems to be controlled primarily by regulation of HisG enzymatic activity. This Aliivibrio fischeri (strain MJ11) (Vibrio fischeri) protein is ATP phosphoribosyltransferase.